The chain runs to 269 residues: Cytochrome c oxidase subunit 3 (269 aa).

Helical transmembrane passes span 21–41 (PWPIVVSFALMSLALSLALTM), 45–65 (IGHMYLIYLSILTVTLSATLW), 90–110 (GFLLFVVSEILIFAALFWAYF), 138–160 (PLLNTIILLSSGATITYSHHGLV), 167–187 (ALSGLLITFWLIVIFVTCQYI), 205–225 (FYAGTGLHFLHMVMLAAMLGI), and 247–267 (VLYCHILDIIWLFLYIVFYWW).

The protein belongs to the cytochrome c oxidase subunit 3 family. Component of the cytochrome c oxidase (complex IV, CIV), a multisubunit enzyme composed of a catalytic core of 3 subunits and several supernumerary subunits. The complex exists as a monomer or a dimer and forms supercomplexes (SCs) in the inner mitochondrial membrane with ubiquinol-cytochrome c oxidoreductase (cytochrome b-c1 complex, complex III, CIII).

It is found in the mitochondrion inner membrane. The enzyme catalyses 4 Fe(II)-[cytochrome c] + O2 + 8 H(+)(in) = 4 Fe(III)-[cytochrome c] + 2 H2O + 4 H(+)(out). Component of the cytochrome c oxidase, the last enzyme in the mitochondrial electron transport chain which drives oxidative phosphorylation. The respiratory chain contains 3 multisubunit complexes succinate dehydrogenase (complex II, CII), ubiquinol-cytochrome c oxidoreductase (cytochrome b-c1 complex, complex III, CIII) and cytochrome c oxidase (complex IV, CIV), that cooperate to transfer electrons derived from NADH and succinate to molecular oxygen, creating an electrochemical gradient over the inner membrane that drives transmembrane transport and the ATP synthase. Cytochrome c oxidase is the component of the respiratory chain that catalyzes the reduction of oxygen to water. Electrons originating from reduced cytochrome c in the intermembrane space (IMS) are transferred via the dinuclear copper A center (CU(A)) of subunit 2 and heme A of subunit 1 to the active site in subunit 1, a binuclear center (BNC) formed by heme A3 and copper B (CU(B)). The BNC reduces molecular oxygen to 2 water molecules using 4 electrons from cytochrome c in the IMS and 4 protons from the mitochondrial matrix. The chain is Cytochrome c oxidase subunit 3 (COX3) from Kluyveromyces lactis (strain ATCC 8585 / CBS 2359 / DSM 70799 / NBRC 1267 / NRRL Y-1140 / WM37) (Yeast).